Reading from the N-terminus, the 247-residue chain is MSPPYPVEILTLFPGMVTGYLGASILGKAQEKGLLATTITDIREYAEGKHRVTDDAPYGGGAGMVMKPEPLVAAIEAAKARHPGARVLLMSPRGPTFTQATARELVRHEAGLILVCGRYEGVDERVMAHLDGELSLGDFVLTGGELAAMTVVDAVARLVPGVLGNVDSSVTESFEEGLLEHPQYTRPPVFRGVEVPAALQSGDHARIARWRRWKSLVLTHERRPDLYARVVLSKADQKLLARREEEL.

Residues Gly-117 and 136-141 (LGDFVL) each bind S-adenosyl-L-methionine.

The protein belongs to the RNA methyltransferase TrmD family. As to quaternary structure, homodimer.

The protein localises to the cytoplasm. The catalysed reaction is guanosine(37) in tRNA + S-adenosyl-L-methionine = N(1)-methylguanosine(37) in tRNA + S-adenosyl-L-homocysteine + H(+). Functionally, specifically methylates guanosine-37 in various tRNAs. This Myxococcus xanthus (strain DK1622) protein is tRNA (guanine-N(1)-)-methyltransferase.